Reading from the N-terminus, the 262-residue chain is MALGLRCFRLVHPAFCNSLAALTRPVSEVTLQTVRGRQNDHGQCMAYAAVPVRHFATKKAKAKGKGQSQTRMNLNTALVEDIINLEEVDEEMKSVIEALKDNFNKTVNIRTSPGALDNITVVTADGKLPLNQISQISMKSPQLILVNMASFPECTAAAIKAIRESGMNLNPEVEGTLIRVPIPKVTREHREMLVKLAKQNTNKAKDSLRKVRTNAINKVKKSKDKASEDTIRLIEKQISQMADDTVAELDRHLAVKTKELLG.

The transit peptide at 1-55 (MALGLRCFRLVHPAFCNSLAALTRPVSEVTLQTVRGRQNDHGQCMAYAAVPVRHF) directs the protein to the mitochondrion.

It belongs to the RRF family.

Its subcellular location is the mitochondrion. Functionally, responsible for the disassembly of ribosomes from messenger RNA at the termination of mitochondrial protein biosynthesis. Acts in collaboration with GFM2. Promotes mitochondrial ribosome recycling by dissolution of intersubunit contacts. This chain is Ribosome-recycling factor, mitochondrial (MRRF), found in Bos taurus (Bovine).